We begin with the raw amino-acid sequence, 152 residues long: Large ribosomal subunit protein uL15 (152 aa).

The disordered stretch occupies residues Met1–Gly54. Residues Gly24–Val37 are compositionally biased toward gly residues.

Belongs to the universal ribosomal protein uL15 family. Part of the 50S ribosomal subunit.

Its function is as follows. Binds to the 23S rRNA. This chain is Large ribosomal subunit protein uL15, found in Psychrobacter sp. (strain PRwf-1).